The sequence spans 547 residues: TBCC domain-containing protein 1 (547 aa).

One can recognise a C-CAP/cofactor C-like domain in the interval 304–435; the sequence is PHTHRMVVMS…LEDHMAHTGL (132 aa).

It belongs to the TBCC family.

It localises to the cytoplasm. Its subcellular location is the cytoskeleton. The protein localises to the microtubule organizing center. The protein resides in the centrosome. It is found in the spindle pole. May play a role in the regulation of centrosome and Golgi apparatus positioning. This chain is TBCC domain-containing protein 1 (tbccd1), found in Xenopus tropicalis (Western clawed frog).